The chain runs to 132 residues: MIVRSFSDIENTDRHVKAASGTWESKRIVLAKEKVGFSLHETVLYAGTETSMWYANHIEAVLCTEGEAELTNDETGETHWITPGTMYLLDGHERHTMRPKTDFRCVCVFNPPVTGREDHDENGVYPLLTEEA.

This sequence belongs to the ectoine synthase family.

The catalysed reaction is (2S)-4-acetamido-2-aminobutanoate = L-ectoine + H2O. It participates in amine and polyamine biosynthesis; ectoine biosynthesis; L-ectoine from L-aspartate 4-semialdehyde: step 3/3. Catalyzes the circularization of gamma-N-acetyl-alpha,gamma-diaminobutyric acid (ADABA) to ectoine (1,4,5,6-tetrahydro-2-methyl-4-pyrimidine carboxylic acid), which is an excellent osmoprotectant. The polypeptide is L-ectoine synthase (ectC) (Streptomyces anulatus (Streptomyces chrysomallus)).